A 326-amino-acid polypeptide reads, in one-letter code: BTB/POZ domain-containing protein At1g21780 (326 aa).

In terms of domain architecture, BTB spans 161-228; that stretch reads TDVIIHTADG…LYGNITQEEF (68 aa).

As to quaternary structure, homodimer. Interacts with CUL3A and CUL3B.

It participates in protein modification; protein ubiquitination. In terms of biological role, may act as a substrate-specific adapter of an E3 ubiquitin-protein ligase complex (CUL3-RBX1-BTB) which mediates the ubiquitination and subsequent proteasomal degradation of target proteins. This is BTB/POZ domain-containing protein At1g21780 from Arabidopsis thaliana (Mouse-ear cress).